Reading from the N-terminus, the 1829-residue chain is Afadin (1829 aa).

One can recognise a Ras-associating 1 domain in the interval 39-133 (FHGVMRFYFQ…GRFVLKNEND (95 aa)). Residues 129-196 (KNENDAIPAK…PSQGDDSENS (68 aa)) are disordered. A coiled-coil region spans residues 146-186 (EKQEKEGVIQNFKRTLSKKEKKEKKKREKEALRQASDKEER). Basic residues predominate over residues 160–172 (TLSKKEKKEKKKR). Residues 173-189 (EKEALRQASDKEERPSQ) show a composition bias toward basic and acidic residues. A phosphoserine mark is found at Ser-216, Ser-246, and Ser-256. The 103-residue stretch at 246–348 (SGGTLRIYAD…LVFQLKRRPP (103 aa)) folds into the Ras-associating 2 domain. Positions 356 to 371 (KKHVEGKPLKGKDRAD) are enriched in basic and acidic residues. The disordered stretch occupies residues 356–377 (KKHVEGKPLKGKDRADGSGYGS). Residues Ser-391 and Ser-424 each carry the phosphoserine modification. The region spanning 441–507 (FGPGIQPHHC…KFVDPIQDHV (67 aa)) is the FHA domain. 5 positions are modified to phosphoserine: Ser-512, Ser-557, Ser-562, Ser-589, and Ser-655. The tract at residues 539-595 (DIHSGTALPASRSTTRLDSDRVSSASSTAERGMVKPMIRLDQEQDYRRRESRTQDAA) is disordered. The span at 576–591 (IRLDQEQDYRRRESRT) shows a compositional bias: basic and acidic residues. Positions 668–915 (NKMVSMMEGV…IENVVAVAEN (248 aa)) constitute a Dilute domain. The PDZ domain maps to 1014–1100 (VITVTLKKQN…VVTLEVAKQG (87 aa)). Phosphoserine is present on residues Ser-1090, Ser-1114, Ser-1133, Ser-1147, Ser-1150, Ser-1179, Ser-1180, Ser-1189, and Ser-1206. The disordered stretch occupies residues 1114-1230 (SPMMQRISDR…PRPEAYPIPT (117 aa)). Residues 1120-1135 (ISDRRGSGKPRPKSEG) are compositionally biased toward basic and acidic residues. Positions 1139 to 1150 (YNNSAQNGSPES) are enriched in polar residues. A compositionally biased stretch (basic and acidic residues) spans 1159–1179 (SEPKKLPGDDRLMKNRADHRS). The span at 1195-1217 (PYTSGTAAKITSVSTGNLCTEEQ) shows a compositional bias: polar residues. Thr-1218 and Thr-1239 each carry phosphothreonine. Ser-1245 and Ser-1282 each carry phosphoserine. The span at 1300 to 1309 (ESGMDRKCDS) shows a compositional bias: basic and acidic residues. 2 disordered regions span residues 1300–1533 (ESGM…EKQQ) and 1574–1724 (RLQE…KTQV). Over residues 1316–1325 (SSSVESSTSS) the composition is skewed to low complexity. A compositionally biased stretch (polar residues) spans 1332-1344 (SSKSVTPASTLTK). At Ser-1335 the chain carries Phosphoserine. At Thr-1337 the chain carries Phosphothreonine. Residues 1371-1380 (LPPPPPPPPA) are compositionally biased toward pro residues. The segment covering 1401–1412 (NQAAPQSAQVAA) has biased composition (low complexity). Over residues 1413–1447 (AERKKREEHQRWYEKEKARLEEERERKRREQERKL) the composition is skewed to basic and acidic residues. The stretch at 1417 to 1454 (KREEHQRWYEKEKARLEEERERKRREQERKLGQMRTQS) forms a coiled coil. Positions 1450–1464 (MRTQSLNPASFSPLA) are enriched in polar residues. A compositionally biased stretch (basic and acidic residues) spans 1494–1510 (TIERRDLQYITISKEEL). Phosphoserine is present on residues Ser-1506 and Ser-1517. Residues 1520-1533 (PWKRDAREKLEKQQ) show a composition bias toward basic and acidic residues. A coiled-coil region spans residues 1530 to 1564 (EKQQQMHIVDMLSKEIHELQNKGDRTAEESDRLRK). The span at 1583 to 1594 (EDDDEEEDDDVD) shows a compositional bias: acidic residues. A coiled-coil region spans residues 1600 to 1672 (QRLEAERRAR…SRLEAERRRQ (73 aa)). The span at 1602–1682 (LEAERRARLQ…HEEAARRLLE (81 aa)) shows a compositional bias: basic and acidic residues. The residue at position 1701 (Ser-1701) is a Phosphoserine. The span at 1715–1724 (RNASYLKTQV) shows a compositional bias: polar residues. At Ser-1726 the chain carries Phosphoserine. The interval 1742–1829 (DEEENYVPAG…TELENELNTK (88 aa)) is disordered. Positions 1753-1764 (NSYSGSAGTTAG) are enriched in polar residues. Residues 1768–1781 (APRDTREKLSRSQD) show a composition bias toward basic and acidic residues. Ser-1779 and Ser-1804 each carry phosphoserine. Positions 1809–1829 (VSDKVKASRKLTELENELNTK) are enriched in basic and acidic residues. Lys-1812 is subject to N6-acetyllysine.

As to quaternary structure, homodimer. Interacts with F-actin, nectin and NECTIN3. Essential for the association of nectin and E-cadherin. Isoform 2/s-afadin does not interact with F-actin. Interacts with ZO-1 and occludin, but probably in an indirect manner. Interacts with RIT1, RIT2, NRXN1 and BCR. Interacts with ADAM10; the interaction locks ADAM10 at adherens junctions following ADAM10 recruitment to adherens junctions by TSPAN33. In terms of tissue distribution, isoform 1 is widely expressed, including in heart, brain, spleen, lung, liver, skeletal muscle, kidney and testis. Isoform 2 is mainly expressed in the brain.

It is found in the cell junction. It localises to the adherens junction. Its function is as follows. Belongs to an adhesion system, probably together with the E-cadherin-catenin system, which plays a role in the organization of homotypic, interneuronal and heterotypic cell-cell adherens junctions (AJs). Nectin- and actin-filament-binding protein that connects nectin to the actin cytoskeleton. May play a key role in the organization of epithelial structures of the embryonic ectoderm. Essential for the organization of adherens junctions. In Rattus norvegicus (Rat), this protein is Afadin.